The primary structure comprises 130 residues: Small ribosomal subunit protein uS11 (130 aa).

Belongs to the universal ribosomal protein uS11 family. In terms of assembly, part of the 30S ribosomal subunit. Interacts with proteins S7 and S18. Binds to IF-3.

Functionally, located on the platform of the 30S subunit, it bridges several disparate RNA helices of the 16S rRNA. Forms part of the Shine-Dalgarno cleft in the 70S ribosome. The protein is Small ribosomal subunit protein uS11 of Synechococcus sp. (strain CC9605).